We begin with the raw amino-acid sequence, 248 residues long: Ubiquinone biosynthesis O-methyltransferase (248 aa).

S-adenosyl-L-methionine-binding residues include arginine 40, glycine 71, aspartate 92, and methionine 135.

It belongs to the methyltransferase superfamily. UbiG/COQ3 family.

The catalysed reaction is a 3-demethylubiquinol + S-adenosyl-L-methionine = a ubiquinol + S-adenosyl-L-homocysteine + H(+). The enzyme catalyses a 3-(all-trans-polyprenyl)benzene-1,2-diol + S-adenosyl-L-methionine = a 2-methoxy-6-(all-trans-polyprenyl)phenol + S-adenosyl-L-homocysteine + H(+). Its pathway is cofactor biosynthesis; ubiquinone biosynthesis. Functionally, O-methyltransferase that catalyzes the 2 O-methylation steps in the ubiquinone biosynthetic pathway. This is Ubiquinone biosynthesis O-methyltransferase from Dinoroseobacter shibae (strain DSM 16493 / NCIMB 14021 / DFL 12).